We begin with the raw amino-acid sequence, 362 residues long: 3-dehydroquinate synthase (362 aa).

NAD(+) is bound by residues 70–75 (EGEQYK), 104–108 (GVIGD), 128–129 (TT), Lys141, Lys150, and 168–171 (TLTT). Zn(2+) contacts are provided by Glu183, His246, and His263.

It belongs to the sugar phosphate cyclases superfamily. Dehydroquinate synthase family. Co(2+) is required as a cofactor. It depends on Zn(2+) as a cofactor. Requires NAD(+) as cofactor.

The protein localises to the cytoplasm. It catalyses the reaction 7-phospho-2-dehydro-3-deoxy-D-arabino-heptonate = 3-dehydroquinate + phosphate. Its pathway is metabolic intermediate biosynthesis; chorismate biosynthesis; chorismate from D-erythrose 4-phosphate and phosphoenolpyruvate: step 2/7. In terms of biological role, catalyzes the conversion of 3-deoxy-D-arabino-heptulosonate 7-phosphate (DAHP) to dehydroquinate (DHQ). The sequence is that of 3-dehydroquinate synthase from Histophilus somni (strain 129Pt) (Haemophilus somnus).